The following is a 556-amino-acid chain: Glutamine--tRNA ligase (556 aa).

The 'HIGH' region motif lies at 39-49 (PEPNGYLHIGH). Residues 40–42 (EPN) and 46–52 (HIGHAKS) each bind ATP. 2 residues coordinate L-glutamine: D72 and Y217. ATP-binding positions include T236 and 267 to 268 (RL). The 'KMSKS' region motif lies at 274–278 (LTSKR).

It belongs to the class-I aminoacyl-tRNA synthetase family. Monomer.

The protein localises to the cytoplasm. The catalysed reaction is tRNA(Gln) + L-glutamine + ATP = L-glutaminyl-tRNA(Gln) + AMP + diphosphate. The chain is Glutamine--tRNA ligase from Haemophilus ducreyi (strain 35000HP / ATCC 700724).